The primary structure comprises 63 residues: SPbeta prophage-derived uncharacterized protein YomP (63 aa).

This Bacillus subtilis (strain 168) protein is SPbeta prophage-derived uncharacterized protein YomP (yomP).